The primary structure comprises 326 residues: Phosphate acyltransferase (326 aa).

The protein belongs to the PlsX family. Homodimer. Probably interacts with PlsY.

It localises to the cytoplasm. It carries out the reaction a fatty acyl-[ACP] + phosphate = an acyl phosphate + holo-[ACP]. The protein operates within lipid metabolism; phospholipid metabolism. In terms of biological role, catalyzes the reversible formation of acyl-phosphate (acyl-PO(4)) from acyl-[acyl-carrier-protein] (acyl-ACP). This enzyme utilizes acyl-ACP as fatty acyl donor, but not acyl-CoA. This is Phosphate acyltransferase from Thermus thermophilus (strain ATCC BAA-163 / DSM 7039 / HB27).